An 804-amino-acid chain; its full sequence is Leucine--tRNA ligase (804 aa).

The 'HIGH' region signature appears at P39–H50. The 'KMSKS' region motif lies at K573–S577. Residue K576 coordinates ATP.

It belongs to the class-I aminoacyl-tRNA synthetase family.

The protein resides in the cytoplasm. The enzyme catalyses tRNA(Leu) + L-leucine + ATP = L-leucyl-tRNA(Leu) + AMP + diphosphate. In Lactobacillus delbrueckii subsp. bulgaricus (strain ATCC 11842 / DSM 20081 / BCRC 10696 / JCM 1002 / NBRC 13953 / NCIMB 11778 / NCTC 12712 / WDCM 00102 / Lb 14), this protein is Leucine--tRNA ligase.